Consider the following 342-residue polypeptide: Tetraacyldisaccharide 4'-kinase (342 aa).

ATP is bound at residue 56 to 63; the sequence is TAGGAGKT.

The protein belongs to the LpxK family.

It catalyses the reaction a lipid A disaccharide + ATP = a lipid IVA + ADP + H(+). It functions in the pathway glycolipid biosynthesis; lipid IV(A) biosynthesis; lipid IV(A) from (3R)-3-hydroxytetradecanoyl-[acyl-carrier-protein] and UDP-N-acetyl-alpha-D-glucosamine: step 6/6. Transfers the gamma-phosphate of ATP to the 4'-position of a tetraacyldisaccharide 1-phosphate intermediate (termed DS-1-P) to form tetraacyldisaccharide 1,4'-bis-phosphate (lipid IVA). This is Tetraacyldisaccharide 4'-kinase from Parvibaculum lavamentivorans (strain DS-1 / DSM 13023 / NCIMB 13966).